The sequence spans 430 residues: Tol-Pal system protein TolB (430 aa).

The N-terminal stretch at 1-21 (MKQALRVAFGFLILWASVLHA) is a signal peptide.

The protein belongs to the TolB family. The Tol-Pal system is composed of five core proteins: the inner membrane proteins TolA, TolQ and TolR, the periplasmic protein TolB and the outer membrane protein Pal. They form a network linking the inner and outer membranes and the peptidoglycan layer.

The protein resides in the periplasm. Its function is as follows. Part of the Tol-Pal system, which plays a role in outer membrane invagination during cell division and is important for maintaining outer membrane integrity. TolB occupies a key intermediary position in the Tol-Pal system because it communicates directly with both membrane-embedded components, Pal in the outer membrane and TolA in the inner membrane. The sequence is that of Tol-Pal system protein TolB from Shigella flexneri serotype 5b (strain 8401).